A 65-amino-acid polypeptide reads, in one-letter code: Large ribosomal subunit protein bL35 (65 aa).

Over residues 1–16 the composition is skewed to basic residues; it reads MPKMKTHRASAKRFKK. The disordered stretch occupies residues 1 to 24; that stretch reads MPKMKTHRASAKRFKKTANGGLKS.

This sequence belongs to the bacterial ribosomal protein bL35 family.

This Leuconostoc mesenteroides subsp. mesenteroides (strain ATCC 8293 / DSM 20343 / BCRC 11652 / CCM 1803 / JCM 6124 / NCDO 523 / NBRC 100496 / NCIMB 8023 / NCTC 12954 / NRRL B-1118 / 37Y) protein is Large ribosomal subunit protein bL35.